Reading from the N-terminus, the 101-residue chain is Co-chaperonin GroES 1 (101 aa).

It belongs to the GroES chaperonin family. In terms of assembly, heptamer of 7 subunits arranged in a ring. Interacts with the chaperonin GroEL.

The protein localises to the cytoplasm. Functionally, together with the chaperonin GroEL, plays an essential role in assisting protein folding. The GroEL-GroES system forms a nano-cage that allows encapsulation of the non-native substrate proteins and provides a physical environment optimized to promote and accelerate protein folding. GroES binds to the apical surface of the GroEL ring, thereby capping the opening of the GroEL channel. In Rhodopirellula baltica (strain DSM 10527 / NCIMB 13988 / SH1), this protein is Co-chaperonin GroES 1.